The following is a 215-amino-acid chain: Hibernation-associated plasma protein HP-27 (215 aa).

The first 30 residues, 1 to 30, serve as a signal peptide directing secretion; the sequence is MYEAGKRASFMGGAGIWILALSVLMHVVCS. The disordered stretch occupies residues 34-79; sequence GNPESCNVPGPQGPPGMRGPPGTPGKPGPPGWNGFPGLPGPPGPPG. A Collagen-like domain is found at 43–81; sequence GPQGPPGMRGPPGTPGKPGPPGWNGFPGLPGPPGPPGMT. Residues 44–63 show a composition bias toward pro residues; sequence PQGPPGMRGPPGTPGKPGPP. The C1q domain maps to 85–215; the sequence is HSKGTSAFAV…VFSGFLIHEN (131 aa). N-linked (GlcNAc...) asparagine glycosylation is present at Asn155.

As to expression, plasma; synthesized in the liver.

The protein resides in the secreted. Its function is as follows. Plasma proteins HP-20, HP-25, HP-27 and HP-55 form a 140 kDa complex via disulfide bonds in the plasma and are hibernation specific. This is Hibernation-associated plasma protein HP-27 from Tamias sibiricus (Siberian chipmunk).